Consider the following 577-residue polypeptide: Mitochondrial-processing peptidase subunit alpha (577 aa).

Residues 1 to 35 (MLNRFRPARLVAQSSRCLPLTRARAGPLPVNNART) constitute a mitochondrion transit peptide. A disordered region spans residues 259–301 (SDAPGLSRTGSETSVDSLVSESSEASSESSSSSSDSSESSGGL). Positions 269–301 (SETSVDSLVSESSEASSESSSSSSDSSESSGGL) are enriched in low complexity.

Belongs to the peptidase M16 family. In terms of assembly, heterodimer of mpp (alpha) and pep (beta) subunits, forming the mitochondrial processing protease (MPP) in which mpp is involved in substrate recognition and binding and pep is the catalytic subunit.

The protein resides in the mitochondrion matrix. Its function is as follows. Substrate recognition and binding subunit of the essential mitochondrial processing protease (MPP), which cleaves the mitochondrial sequence off newly imported precursors proteins. This Neurospora crassa (strain ATCC 24698 / 74-OR23-1A / CBS 708.71 / DSM 1257 / FGSC 987) protein is Mitochondrial-processing peptidase subunit alpha.